Consider the following 388-residue polypeptide: Leucine aminopeptidase 1 (388 aa).

The signal sequence occupies residues 1 to 19 (MRVLAAIALGATGLRGALA). The propeptide occupies 20-88 (AVVPQEVLGT…YPTLNSASYV (69 aa)). Residues Asn-106 and Asn-180 are each glycosylated (N-linked (GlcNAc...) asparagine). His-188 and Asp-207 together coordinate Zn(2+). The N-linked (GlcNAc...) asparagine glycan is linked to Asn-232. The Zn(2+) site is built by Glu-246 and Asp-273. The cysteines at positions 322 and 326 are disulfide-linked. His-355 is a Zn(2+) binding site.

The protein belongs to the peptidase M28 family. M28E subfamily. Monomer. The cofactor is Zn(2+).

It localises to the secreted. Its function is as follows. Extracellular aminopeptidase that allows assimilation of proteinaceous substrates. This chain is Leucine aminopeptidase 1 (lap1), found in Aspergillus clavatus (strain ATCC 1007 / CBS 513.65 / DSM 816 / NCTC 3887 / NRRL 1 / QM 1276 / 107).